The chain runs to 86 residues: MIPAVILFLLLLVEEAAALGEPQLCYILDAILFLYGIVLTLLYCRLKIQVRKADIASREKSDAVYTGLNTRNQETYETLKHEKPPQ.

A signal peptide spans 1 to 18; sequence MIPAVILFLLLLVEEAAA. At 19–23 the chain is on the extracellular side; it reads LGEPQ. Residues 24 to 44 form a helical membrane-spanning segment; the sequence is LCYILDAILFLYGIVLTLLYC. At 45–86 the chain is on the cytoplasmic side; sequence RLKIQVRKADIASREKSDAVYTGLNTRNQETYETLKHEKPPQ. Residues 54-82 form the ITAM domain; the sequence is DIASREKSDAVYTGLNTRNQETYETLKHE. Phosphotyrosine occurs at positions 65 and 76. At threonine 78 the chain carries Phosphothreonine.

It belongs to the CD3Z/FCER1G family. In terms of assembly, igE Fc receptor is a tetramer of an alpha chain, a beta chain, and two disulfide linked gamma chains. Associates with FCGR1A to form a functional receptor complex. The signaling subunit of immunoglobulin gamma (IgG) Fc receptor complex. As a homodimer or a heterodimer of CD247 and FCER1G, associates with the ligand binding subunit FCGR3A to form a functional receptor complex. Associates with CLEC6A. Interacts with CLEC4E. Interacts (via ITAM domain) with SYK (via SH2 domains); activates SYK, enabling integrin-mediated activation of neutrophils and macrophages. Interacts with common beta chain of interleukin 3 receptor CSF2RB and recruits SYK in response to IL3 stimulation; this interaction is direct. Interacts with CD300LH; the interaction may be indirect. Interacts with CD300LD. Interacts with TARM1. Expressed in leukocytes and pinealocytes. Expression in the pineal gland does not undergo circadian variations.

The protein localises to the cell membrane. Its function is as follows. Adapter protein containing an immunoreceptor tyrosine-based activation motif (ITAM) that transduces activation signals from various immunoreceptors. As a component of the high-affinity immunoglobulin E (IgE) receptor, mediates allergic inflammatory signaling in mast cells. As a constitutive component of interleukin-3 receptor complex, selectively mediates interleukin 4/IL4 production by basophils priming T-cells toward effector T-helper 2 subset. Associates with pattern recognition receptors CLEC4D and CLEC4E to form a functional signaling complex in myeloid cells. Binding of mycobacterial trehalose 6,6'-dimycolate (TDM) to this receptor complex leads to phosphorylation of ITAM, triggering activation of SYK, CARD9 and NF-kappa-B, consequently driving maturation of antigen-presenting cells and shaping antigen-specific priming of T-cells toward effector T-helper 1 and T-helper 17 cell subtypes. May function cooperatively with other activating receptors. Functionally linked to integrin beta-2/ITGB2-mediated neutrophil activation. Also involved in integrin alpha-2/ITGA2-mediated platelet activation. The chain is High affinity immunoglobulin epsilon receptor subunit gamma (Fcer1g) from Rattus norvegicus (Rat).